Reading from the N-terminus, the 154-residue chain is 6,7-dimethyl-8-ribityllumazine synthase (154 aa).

Residues phenylalanine 21, 55–57 (AFE), and 79–81 (CVI) contribute to the 5-amino-6-(D-ribitylamino)uracil site. 84-85 (AT) contacts (2S)-2-hydroxy-3-oxobutyl phosphate. Histidine 87 (proton donor) is an active-site residue. A 5-amino-6-(D-ribitylamino)uracil-binding site is contributed by phenylalanine 111. Arginine 125 provides a ligand contact to (2S)-2-hydroxy-3-oxobutyl phosphate.

Belongs to the DMRL synthase family. As to quaternary structure, forms an icosahedral capsid composed of 60 subunits, arranged as a dodecamer of pentamers.

The catalysed reaction is (2S)-2-hydroxy-3-oxobutyl phosphate + 5-amino-6-(D-ribitylamino)uracil = 6,7-dimethyl-8-(1-D-ribityl)lumazine + phosphate + 2 H2O + H(+). It participates in cofactor biosynthesis; riboflavin biosynthesis; riboflavin from 2-hydroxy-3-oxobutyl phosphate and 5-amino-6-(D-ribitylamino)uracil: step 1/2. Its function is as follows. Catalyzes the formation of 6,7-dimethyl-8-ribityllumazine by condensation of 5-amino-6-(D-ribitylamino)uracil with 3,4-dihydroxy-2-butanone 4-phosphate. This is the penultimate step in the biosynthesis of riboflavin. The chain is 6,7-dimethyl-8-ribityllumazine synthase from Macrococcus caseolyticus (strain JCSC5402) (Macrococcoides caseolyticum).